The chain runs to 144 residues: Bacilliredoxin BCE_2233 (144 aa).

The protein belongs to the bacilliredoxin family.

The chain is Bacilliredoxin BCE_2233 from Bacillus cereus (strain ATCC 10987 / NRS 248).